The sequence spans 175 residues: Probable RNA-binding protein EIF1AD (175 aa).

The S1-like domain maps to 5 to 89; that stretch reads TKKRYITNKV…VKGEIEYILD (85 aa). The span at 116–128 shows a compositional bias: basic and acidic residues; it reads EAKRGQTSDKMID. The interval 116–175 is disordered; that stretch reads EAKRGQTSDKMIDDDMLPPSESEEEDESEGEETYDEDDVDDEEEEEFDTYNPNRMQAPSK. A compositionally biased stretch (acidic residues) spans 129 to 163; it reads DDMLPPSESEEEDESEGEETYDEDDVDDEEEEEFD. The span at 165 to 175 shows a compositional bias: polar residues; the sequence is YNPNRMQAPSK.

This sequence belongs to the EIF1AD family.

In Caenorhabditis elegans, this protein is Probable RNA-binding protein EIF1AD.